The sequence spans 992 residues: Tubulin glycylase 3A (992 aa).

2 disordered regions span residues 1–54 (MQTR…NRVV) and 68–113 (QSDS…LGAP). The span at 7 to 26 (SEPHRSRDQVTDGDRNRDQP) shows a compositional bias: basic and acidic residues. A compositionally biased stretch (pro residues) spans 39–49 (VTPPAAPPPTP). Positions 295–645 (FKLTACVAFL…RRTDPKAELG (351 aa)) constitute a TTL domain. ATP-binding positions include 457–460 (QKYI), K470, and D472. Disordered stretches follow at residues 746–766 (SLCS…TATP) and 791–828 (KRNT…PVES). The span at 794-807 (TGGSLSGEQVQSTA) shows a compositional bias: polar residues.

Its subcellular location is the cytoplasm. The protein localises to the cytoskeleton. Polylycylase which modifies alpha- and beta-tubulin, generating side chains of glycine on the gamma-carboxyl groups of specific glutamate residues within the C-terminal tail of alpha- and beta-tubulin. Involved both in the side-chain initiation and elongation steps of the polyglycylation reaction by adding a single glycine chain to generate monoglycine side chains and by elongating monoglycine side chains to polyglycine side chains. The chain is Tubulin glycylase 3A (TTLL3A) from Drosophila melanogaster (Fruit fly).